A 938-amino-acid polypeptide reads, in one-letter code: Isoleucine--tRNA ligase (938 aa).

The 'HIGH' region motif lies at 58 to 68 (PYANGNIHIGH). Glu563 lines the L-isoleucyl-5'-AMP pocket. The 'KMSKS' region signature appears at 604–608 (KMSKS). Position 607 (Lys607) interacts with ATP. Residues Cys903, Cys906, Cys921, and Cys924 each coordinate Zn(2+).

It belongs to the class-I aminoacyl-tRNA synthetase family. IleS type 1 subfamily. Monomer. Zn(2+) is required as a cofactor.

The protein resides in the cytoplasm. The catalysed reaction is tRNA(Ile) + L-isoleucine + ATP = L-isoleucyl-tRNA(Ile) + AMP + diphosphate. In terms of biological role, catalyzes the attachment of isoleucine to tRNA(Ile). As IleRS can inadvertently accommodate and process structurally similar amino acids such as valine, to avoid such errors it has two additional distinct tRNA(Ile)-dependent editing activities. One activity is designated as 'pretransfer' editing and involves the hydrolysis of activated Val-AMP. The other activity is designated 'posttransfer' editing and involves deacylation of mischarged Val-tRNA(Ile). The chain is Isoleucine--tRNA ligase from Buchnera aphidicola subsp. Schizaphis graminum (strain Sg).